Reading from the N-terminus, the 2300-residue chain is Protein hobbit (2300 aa).

The N-terminal stretch at M1 to P21 is a signal peptide. Residues G23–K117 form a transmembrane domain region. 2 disordered regions span residues T269–D290 and V2111–G2148. Polar residues predominate over residues S270 to L282. Residues V1750–D2300 form a required for endoplasmic reticulum-cell membrane contact sites location and binding to phosphatidylinositols region. A compositionally biased stretch (low complexity) spans A2119 to K2140.

It is found in the cell membrane. The protein resides in the endoplasmic reticulum membrane. Its subcellular location is the mitochondrion membrane. In terms of biological role, tube-forming lipid transport protein which binds to phosphatidylinositols and affects phosphatidylinositol-4,5-bisphosphate (PtdIns-4,5-P2) distribution. This is Protein hobbit from Drosophila melanogaster (Fruit fly).